Here is a 284-residue protein sequence, read N- to C-terminus: uncharacterized protein (284 aa).

Glutamine 54 contributes to the FMN binding site. Cysteine 83 (proton donor) is an active-site residue. FMN contacts are provided by residues lysine 125, histidine 153, 183-185 (NGG), and 207-208 (AN).

This sequence belongs to the Dus family. FMN is required as a cofactor.

Functionally, catalyzes the synthesis of dihydrouridine, a modified base found in the D-loop of most tRNAs. This is an uncharacterized protein from Caenorhabditis elegans.